We begin with the raw amino-acid sequence, 519 residues long: PTS system mannitol-specific EIICB component (519 aa).

Over 1-30 the chain is Cytoplasmic; that stretch reads MAQTETQEKKGLGRKVQAFGSFLSSMIMPN. The region spanning 19-351 is the PTS EIIC type-2 domain; the sequence is FGSFLSSMIM…MKFTKEPKQD (333 aa). The helical transmembrane segment at 31–52 threads the bilayer; sequence IGAFIAWGFIAAIFIDNGWYPN. Residues 53–56 lie on the Extracellular side of the membrane; it reads KELS. A helical membrane pass occupies residues 57–77; it reads QLAGPMITYLIPLLIAFSGGR. Topologically, residues 78–141 are cytoplasmic; the sequence is LIHDLRGGIV…QGFEMLFNNF (64 aa). The chain crosses the membrane as a helical span at residues 142–163; sequence SAGILAFIMTILGFKLLAPIMQ. Over 164-172 the chain is Extracellular; the sequence is FIMHILSVA. A helical transmembrane segment spans residues 173-193; the sequence is VEFLVHLHLLPIVSIIVEPAK. At 194–280 the chain is on the cytoplasmic side; it reads ILFLNNAINH…VLMRPLLFIA (87 aa). The chain crosses the membrane as a helical span at residues 281–300; sequence VILGGMTGVATYQATGFGFK. The Extracellular segment spans residues 301 to 320; sequence SPASPGSFIVYCLNAPKGEF. The helical transmembrane segment at 321–342 threads the bilayer; the sequence is LHMVLGVFLAALVSFVVAALIM. Residues 343–519 are Cytoplasmic-facing; the sequence is KFTKEPKQDL…NNLKKDQDKA (177 aa). A disordered region spans residues 366 to 406; that stretch reads KSSVSSKLTGATTGTGAAGVAANKANGEDQNEASSEDEEED. Over residues 367 to 387 the composition is skewed to low complexity; that stretch reads SSVSSKLTGATTGTGAAGVAA. A compositionally biased stretch (acidic residues) spans 394 to 406; the sequence is DQNEASSEDEEED. A PTS EIIB type-2 domain is found at 425 to 519; sequence DHVIFACDAG…NNLKKDQDKA (95 aa). Cys431 acts as the Phosphocysteine intermediate; for EIIB activity in catalysis. Cys431 is subject to Phosphocysteine; by EIIA.

In terms of assembly, homodimer.

It localises to the cell membrane. The catalysed reaction is D-mannitol(out) + N(pros)-phospho-L-histidyl-[protein] = D-mannitol 1-phosphate(in) + L-histidyl-[protein]. Functionally, the phosphoenolpyruvate-dependent sugar phosphotransferase system (sugar PTS), a major carbohydrate active transport system, catalyzes the phosphorylation of incoming sugar substrates concomitantly with their translocation across the cell membrane. The enzyme II CmtAB PTS system is involved in D-mannitol transport. The chain is PTS system mannitol-specific EIICB component (mtlA) from Staphylococcus haemolyticus (strain JCSC1435).